Consider the following 360-residue polypeptide: Peptide chain release factor 1 (360 aa).

Q235 is subject to N5-methylglutamine. Positions 281–310 are disordered; that stretch reads AERQRQDAAQAESRRLQVGSGDRSQRIRTY.

This sequence belongs to the prokaryotic/mitochondrial release factor family. Methylated by PrmC. Methylation increases the termination efficiency of RF1.

It is found in the cytoplasm. In terms of biological role, peptide chain release factor 1 directs the termination of translation in response to the peptide chain termination codons UAG and UAA. This is Peptide chain release factor 1 from Stenotrophomonas maltophilia (strain R551-3).